The sequence spans 380 residues: MAPNLRKSHPLLKMINNSLIDLPTPSNISAWWNFGSLLGICLATQILTGLLLAAHYTADTTLAFSSVAHTCRNVQHGWLIRNLHANGASFFFICIYLHIGRGLYYGSYLYKETWNTGVILLLTLMATAFVGYVLPWGQMSFWGATVITNLFSAVPYIGQTLVEWAWGGFSVDNPTLTRFFTLHFLLPFMIMGLTLIHLTFLHESGSNNPLGIVSNCDKIPFHPYFSLKDILGFMLMLLPLMTLALFSPNLLGDPENFTPANPLVTPPHIKPEWYFLFAYAILRSIPNKLGGVLALAASVLILFLAPLLHKSKQCTMTFRPFSQLLFWTLTANLLILTWVGSQPVEHPFIIIGQLASLTYFTILLILFPIIGALENKMLNY.

The next 4 membrane-spanning stretches (helical) occupy residues 34–54 (FGSL…LLAA), 78–99 (WLIR…YLHI), 114–134 (WNTG…GYVL), and 179–199 (FFTL…IHLT). Residues histidine 84 and histidine 98 each coordinate heme b. Positions 183 and 197 each coordinate heme b. Residue histidine 202 coordinates a ubiquinone. Transmembrane regions (helical) follow at residues 227–247 (LKDI…ALFS), 289–309 (LGGV…PLLH), 321–341 (FSQL…WVGS), and 348–368 (FIII…ILFP).

It belongs to the cytochrome b family. In terms of assembly, the cytochrome bc1 complex contains 11 subunits: 3 respiratory subunits (MT-CYB, CYC1 and UQCRFS1), 2 core proteins (UQCRC1 and UQCRC2) and 6 low-molecular weight proteins (UQCRH/QCR6, UQCRB/QCR7, UQCRQ/QCR8, UQCR10/QCR9, UQCR11/QCR10 and a cleavage product of UQCRFS1). This cytochrome bc1 complex then forms a dimer. Heme b is required as a cofactor.

Its subcellular location is the mitochondrion inner membrane. Functionally, component of the ubiquinol-cytochrome c reductase complex (complex III or cytochrome b-c1 complex) that is part of the mitochondrial respiratory chain. The b-c1 complex mediates electron transfer from ubiquinol to cytochrome c. Contributes to the generation of a proton gradient across the mitochondrial membrane that is then used for ATP synthesis. The sequence is that of Cytochrome b (MT-CYB) from Antigone rubicunda (Brolga crane).